Reading from the N-terminus, the 520-residue chain is Hydroxymethylglutaryl-CoA synthase, cytoplasmic (520 aa).

At Ser-4 the chain carries Phosphoserine. 2 residues coordinate (3S)-3-hydroxy-3-methylglutaryl-CoA: Asp-43 and Ala-44. Position 44–46 (44–46) interacts with CoA; it reads AGK. Residue Lys-46 is modified to N6-acetyllysine. Glu-95 (proton donor/acceptor) is an active-site residue. Residues Cys-129, Asn-167, Thr-171, Ser-221, and His-264 each coordinate (3S)-3-hydroxy-3-methylglutaryl-CoA. Cys-129 serves as the catalytic Acyl-thioester intermediate. A CoA-binding site is contributed by Asn-167. A CoA-binding site is contributed by Ser-221. The active-site Proton donor/acceptor is His-264. Lys-269 and Lys-273 together coordinate CoA. Residues Lys-273, Asn-343, and Ser-377 each coordinate (3S)-3-hydroxy-3-methylglutaryl-CoA. Lys-273 bears the N6-acetyllysine mark. A disordered region spans residues 486 to 520; sequence SNTATEHIPSPAKKVPRLPATAAESESAVISNGEH. 2 positions are modified to phosphoserine: Ser-495 and Ser-516.

It belongs to the thiolase-like superfamily. HMG-CoA synthase family. As to quaternary structure, homodimer.

Its subcellular location is the cytoplasm. It catalyses the reaction acetoacetyl-CoA + acetyl-CoA + H2O = (3S)-3-hydroxy-3-methylglutaryl-CoA + CoA + H(+). The protein operates within metabolic intermediate biosynthesis; (R)-mevalonate biosynthesis; (R)-mevalonate from acetyl-CoA: step 2/3. This enzyme condenses acetyl-CoA with acetoacetyl-CoA to form HMG-CoA, which is converted by HMG-CoA reductase (HMGCR) into mevalonate, a precursor for cholesterol synthesis. The chain is Hydroxymethylglutaryl-CoA synthase, cytoplasmic from Cricetulus griseus (Chinese hamster).